Consider the following 279-residue polypeptide: Probable endonuclease 4 (279 aa).

Zn(2+) contacts are provided by histidine 66, histidine 106, glutamate 142, aspartate 176, histidine 179, histidine 213, aspartate 226, histidine 228, and glutamate 258.

Belongs to the AP endonuclease 2 family. It depends on Zn(2+) as a cofactor.

The catalysed reaction is Endonucleolytic cleavage to 5'-phosphooligonucleotide end-products.. Endonuclease IV plays a role in DNA repair. It cleaves phosphodiester bonds at apurinic or apyrimidinic (AP) sites, generating a 3'-hydroxyl group and a 5'-terminal sugar phosphate. The chain is Probable endonuclease 4 from Photobacterium profundum (strain SS9).